The sequence spans 2162 residues: Calpain-type cysteine protease ADL1 (2162 aa).

The signal sequence occupies residues 1–33 (MEEEEHRGVVLVCSICGFLFAVLGPLSFWILWA). Over 34 to 70 (VNWRPWRLYSWIYARKWPAYVQGPQLSTLCSFFTLFA) the chain is Extracellular. Residues 71–91 (WLVVVSPITVLLVWGGILIAL) form a helical membrane-spanning segment. The Cytoplasmic segment spans residues 92–95 (LERN). A helical membrane pass occupies residues 96-116 (IIGLAVIMVGVALLLSFYSIM). Over 117–127 (LWWRTQWQSSK) the chain is Extracellular. A helical membrane pass occupies residues 128–148 (AVAYLLLLAVGLLCAYEFCAV). The Cytoplasmic segment spans residues 149–164 (YVTTGASASELNSPSG). A helical membrane pass occupies residues 165 to 185 (FFFGVSAISLAINMLFISKIL). At 186 to 236 (FNGSGFDVDEYVRRLYKFAYSDCVEVAPVSCSPDPPDPSELYMTKSSRVLH) the chain is on the extracellular side. A helical membrane pass occupies residues 237–257 (LGLLYLCSLMVLVVYSILYGL). At 258–264 (TSKEARW) the chain is on the cytoplasmic side. Residues 265–285 (LGALTSVAVVILDWNLGLCSF) form a helical membrane-spanning segment. Residues 286–294 (RFELLKSRM) are Extracellular-facing. A helical membrane pass occupies residues 295 to 315 (IALFVAGTSRVFLICFGVHYW). Residues 316-320 (YLGHC) lie on the Cytoplasmic side of the membrane. The chain crosses the membrane as a helical span at residues 321–341 (ISYAFVASVLLAAAVSCWLSI). Over 342 to 626 (SNPSVARIDA…LMFHQVAGSP (285 aa)) the chain is Extracellular. Residues 366-403 (KGQTSSSNSSDGCGSSVKRSSGSVEAGPHGNATDSMYR) form a disordered region. Over residues 370–381 (SSSNSSDGCGSS) the composition is skewed to low complexity. Residues 627 to 647 (IRAFVVFTLIFIIETVTVAVH) form a helical membrane-spanning segment. The Cytoplasmic segment spans residues 648 to 663 (RPKPIKVINATHEQFE). The helical transmembrane segment at 664–684 (FGFSILLLSPVVCSIMAFIWS) threads the bilayer. Over 685-697 (LCAEEMTMTSKPR) the chain is Extracellular. A helical transmembrane segment spans residues 698–718 (KYGFIAWLLSTCVGLLLSFLS). Topologically, residues 719–722 (KSSV) are cytoplasmic. The chain crosses the membrane as a helical span at residues 723-743 (ILGLSLTVPLMVACLSFAIPI). At 744–773 (WMRNGYRFWIPGGELDSRENIRQAPGKKER) the chain is on the extracellular side. Residues 774–794 (ALFAISITVFTASVIGLGAIV) form a helical membrane-spanning segment. The Cytoplasmic segment spans residues 795–825 (SAKPLDALGYKGWDADKKSFYSPYATSMYLG). A helical membrane pass occupies residues 826–846 (WALSSTIAVLATGVIPIVAWF). Topologically, residues 847–856 (ATYRFSPSSA) are extracellular. Residues 857-877 (ICVGLFATVLVSFCGVSYWGV) form a helical membrane-spanning segment. Residues 878-890 (VNSRQDGVPLKAD) lie on the Cytoplasmic side of the membrane. The helical transmembrane segment at 891–911 (FLAALLPLLCIPAVFSLFTGM) threads the bilayer. Residues 912–924 (YKWKDDDWKISRG) lie on the Extracellular side of the membrane. Residues 925-945 (VYLFVGMGVLLLLGAISAVIV) traverse the membrane as a helical segment. Residues 946–949 (TIRP) lie on the Cytoplasmic side of the membrane. A helical membrane pass occupies residues 950–970 (WTVGVACLLVILFLVFAIGVI). Over 971–984 (HYWTSNNFYLTRTQ) the chain is Extracellular. The chain crosses the membrane as a helical span at residues 985–1005 (MLLVCSLAFLLALAAFLMGLF). Topologically, residues 1006–1019 (QEKPFVGASIGYFS) are cytoplasmic. The helical transmembrane segment at 1020 to 1040 (FLFLLTGRALTVLLSPPIVVY) threads the bilayer. Residues 1041 to 1063 (SPRVLPVYVYDAHADSAKNVSYA) lie on the Extracellular side of the membrane. The chain crosses the membrane as a helical span at residues 1064–1084 (FLILYGIALATEVWGVIASLI). At 1085-2162 (LNPPFIGAAI…TKAPIKLEAV (1078 aa)) the chain is on the cytoplasmic side. 2 positions are modified to phosphoserine: Ser-1372 and Ser-1377. Residues 1418 to 1611 (TGRHCGEIDL…ICSAEYGLFD (194 aa)) enclose the Calpain catalytic 1 domain. Ser-1668 is subject to Phosphoserine. The 303-residue stretch at 1706–2008 (NFTDQEFPPD…FRSIYVCRVY (303 aa)) folds into the Calpain catalytic 2 domain. Active-site residues include Cys-1772, His-1930, and Asn-1950.

The protein belongs to the peptidase C2 family. In terms of processing, autocatalytic proteolytic cleavage leading to the production of mainly cytoplasmic localized subproducts of about 85 and 120 kDa. As to expression, ubiquitously expressed with higher levels in embryos, vasculatures, leaf primordia, leaf margins, and shoot apical meristem (SAM).

The protein localises to the endoplasmic reticulum membrane. It is found in the cytoplasm. It localises to the cell membrane. Its subcellular location is the endosome membrane. Essential protease involved in epiderm development. Required for aleurone cell development in the endosperm probably by maintaining and restricting the aleurone and embryonic epidermal L1 cell-layer fates as well as meristems organization. Involved in the maintenance of adaxial/abaxial axis information in developing leaves, probably by regulating cell proliferation and expansion. Does not need calcium ions to be active. This chain is Calpain-type cysteine protease ADL1 (ADL1), found in Oryza sativa subsp. japonica (Rice).